A 268-amino-acid chain; its full sequence is MSSSTLLHLLLLSSLLFSCLANVEDEFSYIEGNPNGPENWGNLKPEWETCGKGMEQSPIQLRDNRVIFDQTLGRLRRNYRAVDARLRNSGHDVLVEFKGNAGSLSINRVAYQLKRIHFHSPSEHEMNGERFDLEAQLVHESQDQKRAVVSILFIFGRADPFLSDLEDFIKQFSSSQKNEINAGVVDPNQLQIDDSAYYRYMGSFTAPPCTEGISWTVMRKVATVSPRQVLLLKQAVNENAINNARPLQPTNFRSVFYFEQLKSKVCAI.

The region spanning 25–259 is the Alpha-carbonic anhydrase domain; it reads DEFSYIEGNP…TNFRSVFYFE (235 aa). Residues Cys50 and Cys209 are joined by a disulfide bond. The active-site Proton acceptor is His91. Residues Asp92, 117–119, Gln136, and 205–206 each bind L-ascorbate; these read HFH and TA.

The protein belongs to the alpha-class carbonic anhydrase family. In terms of assembly, monomer. Homodimer. In terms of processing, not glycosylated. Expressed in tuber (at protein level).

The enzyme catalyses hydrogencarbonate + H(+) = CO2 + H2O. It carries out the reaction 2 monodehydro-L-ascorbate radical + NADH + H(+) = 2 L-ascorbate + NAD(+). Functionally, storage protein of tuber. Involved in protection against oxidative stress. Has carbonate dehydratase and weak trypsin inhibitor activity detected by measuring the dehydration of sodium bicarbonate and the inhibition of trypsin-catalyzed hydrolysis of N-benzoyl-L-arginine-4-nitro anilide, respectively. Contrarily, no carbonate dehydratase or trypsin inhibitor activity detected by measuring the hydrolysis of 4-nitrophenyl acetate or the inhibition of bovine trypsin-catalyzed hydrolysis of N-benzoyl-L-arginine ethyl ester, respectively. Has dehydroascorbate (DHA) reductase and monodehydroascorbate (MDA) reductase activities. Catalyzes the reactions of carbonate dehydratase and DHA reductase independently of zinc and glutathione (GSH). The coupled reaction is capable of recycling a plant antioxidant ascorbate using ubiquitous compounds H(2)O and CO(2). Exhibits antioxidant activity. Able to scavenge 1,1-diphenyl-2-picrylhydrazyl (DPPH) radical and hydroxyl radicals. Exhibits immunomodulatory activity. Activates Toll-like receptor 4 signaling pathways by up-regulating the gene expression of pro-inflammatory cytokines, such as tumor necrosis factor alpha, interleukin-1 beta and interleukin-6, and chemokines RANTES and MCP-1, in mouse RAW 264.7 macrophages. Stimulates the phagocytosis of E.coli by the LPS-treated mouse macrophages. The chain is Dioscorin DB3S from Dioscorea polystachya (Chinese yam).